We begin with the raw amino-acid sequence, 916 residues long: Probable serine/threonine-protein kinase DDB_G0267514 (916 aa).

Disordered regions lie at residues 283–311, 461–518, and 550–646; these read SGGG…SGGS, NNNQ…SPLD, and FNNQ…EPPS. Composition is skewed to low complexity over residues 461–493 and 550–622; these read NNNQ…QQQP and FNNQ…LINN. A compositionally biased stretch (polar residues) spans 623-646; sequence HSPNQYNNQGNILKNSGSVVEPPS. The 255-residue stretch at 662–916 folds into the Protein kinase domain; the sequence is LKISSKLGEG…EILNLLNEIP (255 aa). Residues 668 to 676 and lysine 689 contribute to the ATP site; that span reads LGEGTFGVV. Residue aspartate 784 is the Proton acceptor of the active site.

Belongs to the protein kinase superfamily. TKL Ser/Thr protein kinase family.

The catalysed reaction is L-seryl-[protein] + ATP = O-phospho-L-seryl-[protein] + ADP + H(+). The enzyme catalyses L-threonyl-[protein] + ATP = O-phospho-L-threonyl-[protein] + ADP + H(+). The chain is Probable serine/threonine-protein kinase DDB_G0267514 from Dictyostelium discoideum (Social amoeba).